Here is a 126-residue protein sequence, read N- to C-terminus: Nuclear transport factor 2B (126 aa).

Residue Ser-2 is modified to N-acetylserine. Residues 9–123 (VSKAFVEHYY…FYVFNDIFRL (115 aa)) enclose the NTF2 domain.

Interacts with RAN1. As to expression, expressed in roots, stems, leaves and flowers, and, at low levels, in siliques.

It localises to the cytoplasm. The protein resides in the nucleus. The protein localises to the nucleus envelope. Functionally, facilitates protein transport into the nucleus. Interacts with various nucleoporins and with Ran-GDP. Could be part of a multicomponent system of cytosolic factors that assemble at the pore complex during nuclear import. The protein is Nuclear transport factor 2B of Arabidopsis thaliana (Mouse-ear cress).